The sequence spans 222 residues: uncharacterized protein (222 aa).

Residues 142–222 (ARRGGCVHPP…LPDPPSAGHL (81 aa)) are disordered. Residues 160-169 (QSRSISSRRA) are compositionally biased toward low complexity. Residues 182-196 (PRRRPHRHRTRPQTR) show a composition bias toward basic residues.

The protein belongs to the Rv1128c/1148c/1588c/1702c/1945/3466 family.

This is an uncharacterized protein from Mycobacterium tuberculosis (strain ATCC 25618 / H37Rv).